Reading from the N-terminus, the 317-residue chain is Glycine--tRNA ligase alpha subunit (317 aa).

This sequence belongs to the class-II aminoacyl-tRNA synthetase family. Tetramer of two alpha and two beta subunits.

Its subcellular location is the cytoplasm. It carries out the reaction tRNA(Gly) + glycine + ATP = glycyl-tRNA(Gly) + AMP + diphosphate. This is Glycine--tRNA ligase alpha subunit from Pseudomonas fluorescens (strain SBW25).